The sequence spans 409 residues: Serine/threonine transporter SstT (409 aa).

9 consecutive transmembrane segments (helical) span residues Gly14 to Ala34, Gly57 to Ile77, Ile89 to Phe109, Ala149 to Leu169, Ile190 to Val210, Leu224 to Val244, Ile296 to Leu316, Ile338 to Ile358, and Phe365 to Val385.

It belongs to the dicarboxylate/amino acid:cation symporter (DAACS) (TC 2.A.23) family.

The protein localises to the cell inner membrane. It carries out the reaction L-serine(in) + Na(+)(in) = L-serine(out) + Na(+)(out). The catalysed reaction is L-threonine(in) + Na(+)(in) = L-threonine(out) + Na(+)(out). Its function is as follows. Involved in the import of serine and threonine into the cell, with the concomitant import of sodium (symport system). This is Serine/threonine transporter SstT from Campylobacter fetus subsp. fetus (strain 82-40).